Consider the following 187-residue polypeptide: Elongation factor P (187 aa).

It belongs to the elongation factor P family.

It is found in the cytoplasm. The protein operates within protein biosynthesis; polypeptide chain elongation. Its function is as follows. Involved in peptide bond synthesis. Stimulates efficient translation and peptide-bond synthesis on native or reconstituted 70S ribosomes in vitro. Probably functions indirectly by altering the affinity of the ribosome for aminoacyl-tRNA, thus increasing their reactivity as acceptors for peptidyl transferase. In Mycolicibacterium vanbaalenii (strain DSM 7251 / JCM 13017 / BCRC 16820 / KCTC 9966 / NRRL B-24157 / PYR-1) (Mycobacterium vanbaalenii), this protein is Elongation factor P.